Here is a 248-residue protein sequence, read N- to C-terminus: 23S rRNA (guanosine-2'-O-)-methyltransferase RlmB (248 aa).

S-adenosyl-L-methionine is bound by residues Gly-198, Leu-218, and Leu-227.

Belongs to the class IV-like SAM-binding methyltransferase superfamily. RNA methyltransferase TrmH family. RlmB subfamily.

It is found in the cytoplasm. It catalyses the reaction guanosine(2251) in 23S rRNA + S-adenosyl-L-methionine = 2'-O-methylguanosine(2251) in 23S rRNA + S-adenosyl-L-homocysteine + H(+). Its function is as follows. Specifically methylates the ribose of guanosine 2251 in 23S rRNA. In Pseudomonas putida (strain ATCC 47054 / DSM 6125 / CFBP 8728 / NCIMB 11950 / KT2440), this protein is 23S rRNA (guanosine-2'-O-)-methyltransferase RlmB.